A 433-amino-acid chain; its full sequence is Trigger factor (433 aa).

The PPIase FKBP-type domain maps to 163–248; that stretch reads GDVVVLDFAA…VHAVKERRLP (86 aa).

Belongs to the FKBP-type PPIase family. Tig subfamily.

Its subcellular location is the cytoplasm. It catalyses the reaction [protein]-peptidylproline (omega=180) = [protein]-peptidylproline (omega=0). Involved in protein export. Acts as a chaperone by maintaining the newly synthesized protein in an open conformation. Functions as a peptidyl-prolyl cis-trans isomerase. This chain is Trigger factor, found in Nitratidesulfovibrio vulgaris (strain DP4) (Desulfovibrio vulgaris).